A 96-amino-acid chain; its full sequence is uncharacterized protein (96 aa).

The next 3 helical transmembrane spans lie at 2 to 22 (FIFN…ICYF), 38 to 58 (AGLK…TVML), and 68 to 88 (LTLA…QLIV).

The protein resides in the membrane. This is an uncharacterized protein from Schizosaccharomyces pombe (strain 972 / ATCC 24843) (Fission yeast).